A 573-amino-acid chain; its full sequence is Pyrophosphate--fructose 6-phosphate 1-phosphotransferase (573 aa).

Glycine 90 is a diphosphate binding site. Residue aspartate 184 participates in Mg(2+) binding. Substrate is bound by residues 212–214 (TID), 251–252 (KY), 259–261 (MGR), glutamate 320, and 434–437 (YEGR). Catalysis depends on aspartate 214, which acts as the Proton acceptor.

Belongs to the phosphofructokinase type A (PFKA) family. PPi-dependent PFK group II subfamily. Clade 'Long' sub-subfamily. Homodimer. Mg(2+) serves as cofactor.

It localises to the cytoplasm. The enzyme catalyses beta-D-fructose 6-phosphate + diphosphate = beta-D-fructose 1,6-bisphosphate + phosphate + H(+). The protein operates within carbohydrate degradation; glycolysis; D-glyceraldehyde 3-phosphate and glycerone phosphate from D-glucose: step 3/4. Non-allosteric. Catalyzes the phosphorylation of D-fructose 6-phosphate, the first committing step of glycolysis. Uses inorganic phosphate (PPi) as phosphoryl donor instead of ATP like common ATP-dependent phosphofructokinases (ATP-PFKs), which renders the reaction reversible, and can thus function both in glycolysis and gluconeogenesis. Consistently, PPi-PFK can replace the enzymes of both the forward (ATP-PFK) and reverse (fructose-bisphosphatase (FBPase)) reactions. This chain is Pyrophosphate--fructose 6-phosphate 1-phosphotransferase, found in Treponema pallidum (strain Nichols).